The sequence spans 359 residues: Gene 58 protein (359 aa).

Transmembrane regions (helical) follow at residues 12–32 (TMAA…CFLF), 45–65 (VDEL…FFCF), 75–95 (YLDL…ICLQ), 103–123 (YLPI…PVTF), 132–152 (YANA…YLLL), 154–174 (FGSV…IAGL), 220–240 (LCVV…AGVY), 246–266 (VLKT…GMGY), 271–289 (ATFV…VFVL), 296–318 (SVLF…TIML), and 330–350 (IVLS…NVLY).

Belongs to the herpesviridae BMRF2 family.

The protein resides in the host membrane. The sequence is that of Gene 58 protein (58) from Equine herpesvirus 2 (strain 86/87) (EHV-2).